The following is a 144-amino-acid chain: Putative pre-16S rRNA nuclease (144 aa).

Belongs to the YqgF nuclease family.

The protein resides in the cytoplasm. Could be a nuclease involved in processing of the 5'-end of pre-16S rRNA. The chain is Putative pre-16S rRNA nuclease from Pseudomonas paraeruginosa (strain DSM 24068 / PA7) (Pseudomonas aeruginosa (strain PA7)).